Here is a 300-residue protein sequence, read N- to C-terminus: Protein ARMCX6 (300 aa).

Residues 1 to 6 (MGRARE) are Mitochondrial intermembrane-facing. 2 mitochondrion outer membrane (MOM)-targeting sequence regions span residues 1-6 (MGRARE) and 26-36 (KLTIGRDDSEK). The chain crosses the membrane as a helical; Signal-anchor span at residues 7–27 (VGWMAAGLMIGAGACYCVYKL). The Cytoplasmic portion of the chain corresponds to 28–300 (TIGRDDSEKL…REILLETPAP (273 aa)). Disordered stretches follow at residues 35 to 54 (EKLEEEGEEEWDDDQELDEE) and 69 to 99 (WTEDGDWTEPGAPGGTEDRPSGGGKANRAHP).

It belongs to the eutherian X-chromosome-specific Armcx family.

The protein resides in the mitochondrion. The protein localises to the mitochondrion outer membrane. May regulate the dynamics and distribution of mitochondria in neural cells. The chain is Protein ARMCX6 (ARMCX6) from Homo sapiens (Human).